A 429-amino-acid chain; its full sequence is MFRTHLVSELNPKLDGSEVKVAGWVHNVRNLGGKIFILLRDKSGIGQIVVEKGNNAYDKVINIGLESTIVVNGVVKADARAPNGVEVHAKDIEILSYARSPLPLDVTGKVKADIDTRLRERLLDLRRLEMQAVLKIQSVAVKSFRETLYKHGFVEVFTPKIIASATEGGAQLFPVLYFGKEAFLAQSPQLYKELLAGAIERVFEIAPAWRAEESDTPYHLSEFISMDVEMAFADYNDIMALIEQIIYNMINDVKRECENELKILNYTPPNVRIPIKKVSYSDAIELLKSKGVNIKFGDDIGTPELRVLYNELKEDLYFVTDWPWLSRPFYTKQKKDNPQLSESFDLIFRWLEIVSGSSRNHVKEVLENSLKVRGLNPESFEFFLKWFDYGMPPHAGFGMGLARVMLMLTGLQSVKEVVPFPRDKKRLTP.

Residue E167 participates in L-aspartate binding. The tract at residues 189–192 (QLYK) is aspartate. Residue R210 coordinates L-aspartate. ATP contacts are provided by residues 210-212 (RAE) and E352. Residues E352 and S355 each coordinate Mg(2+). L-aspartate is bound by residues S355 and R359. 400–403 (GLAR) is a binding site for ATP.

Belongs to the class-II aminoacyl-tRNA synthetase family. Type 2 subfamily. Homodimer. Requires Mg(2+) as cofactor.

The protein localises to the cytoplasm. It carries out the reaction tRNA(Asx) + L-aspartate + ATP = L-aspartyl-tRNA(Asx) + AMP + diphosphate. Functionally, aspartyl-tRNA synthetase with relaxed tRNA specificity since it is able to aspartylate not only its cognate tRNA(Asp) but also tRNA(Asn). Reaction proceeds in two steps: L-aspartate is first activated by ATP to form Asp-AMP and then transferred to the acceptor end of tRNA(Asp/Asn). This chain is Aspartate--tRNA(Asp/Asn) ligase, found in Saccharolobus solfataricus (strain ATCC 35092 / DSM 1617 / JCM 11322 / P2) (Sulfolobus solfataricus).